The following is a 90-amino-acid chain: Probable Fe(2+)-trafficking protein (90 aa).

Belongs to the Fe(2+)-trafficking protein family.

In terms of biological role, could be a mediator in iron transactions between iron acquisition and iron-requiring processes, such as synthesis and/or repair of Fe-S clusters in biosynthetic enzymes. The polypeptide is Probable Fe(2+)-trafficking protein (Haemophilus influenzae (strain PittEE)).